The following is a 101-amino-acid chain: Small ribosomal subunit protein bS18c (101 aa).

The protein belongs to the bacterial ribosomal protein bS18 family. Part of the 30S ribosomal subunit.

Its subcellular location is the plastid. The protein resides in the chloroplast. This Populus alba (White poplar) protein is Small ribosomal subunit protein bS18c.